Reading from the N-terminus, the 248-residue chain is MKWKEQAVILGVRQYGETSVILEIITRERGRYMGVVKGGRSRRMAALLQPGNFVEAEWSARLEEHLGLFRLEALDFHAARLICLPEALYALQLIAFHLRLLPERDPHPVLYDILHLFMQNFDEPFVNAELLVRFEMRLLEELGFGLDLSCCAATGRKQKLYYVSPKSGRAVCEEAGEPWKKKLLILPQFLVQRATRPADFRDIINGFNLTSFFLMRYVWEPRDIKQPSVRTNLIQLFERRFGIQAFIC.

This sequence belongs to the RecO family.

Its function is as follows. Involved in DNA repair and RecF pathway recombination. The protein is DNA repair protein RecO of Bartonella tribocorum (strain CIP 105476 / IBS 506).